Consider the following 491-residue polypeptide: Carboxypeptidase SOL1 (491 aa).

Residues 1–25 (MSKLRFFQSLLISTVICFFLPSINA) form the signal peptide. Residues 26–452 (RGGHSDHIHP…LLTQFFTETN (427 aa)) lie on the Extracellular side of the membrane. N39 carries an N-linked (GlcNAc...) asparagine glycan. In terms of domain architecture, Peptidase M14 spans 64–338 (GYMTNDDLEK…KSMLNLVASL (275 aa)). 2 residues coordinate Zn(2+): H125 and E128. Substrate contacts are provided by residues 125–128 (HGDE) and 186–187 (NR). H226 serves as a coordination point for Zn(2+). Residue N268 is glycosylated (N-linked (GlcNAc...) asparagine). Residue Y286 coordinates substrate. E308 (proton donor/acceptor) is an active-site residue. A helical transmembrane segment spans residues 453–470 (NGITLTLFVVVVFLCFLL). Over 471–491 (QRRVRFNLWKQRQSSRRSITV) the chain is Cytoplasmic.

The protein belongs to the peptidase M14 family. Zn(2+) is required as a cofactor. Expressed in roots, shoots, leaves, flowers and siliques.

The protein localises to the endosome membrane. In terms of biological role, possesses in vitro carboxypeptidase activity against the C-terminal arginine and lysine residues. Involved in the maturation of CLE19. Removes the C-terminal arginine residue of CLE19 proprotein. The cleavage of the C-terminal arginine residue is necessary for CLE19 activity in vivo. Is not involved in generating active CLV3. Is not involved in CLE19 or CLV3 perception. This is Carboxypeptidase SOL1 from Arabidopsis thaliana (Mouse-ear cress).